The sequence spans 590 residues: MGEELKTLKRTCMCGGLTEANIGDKITVMGWVQRKRNLGGLVFVDLRDRTGILQIVFGEAINKEAFEKSDSVKSEYCIAAVGTIVKRESPNMEIPTGMVELKGEYIKIFSESETPPIYIKENLDAAENIRLKYRYLDLRRPDMQRIFMLRHKTAKVIRDFLDEQGFLEIETPILGKSTPEGARDYLVPSRNYKGKYYALPQSPQLFKQLLMVSGYDRYFQIAKCFRDEDLRANRQPEFTQVDMEISFVDQEEVMDLNERLIQRVFKQILDVDVKLPIERMTYKTAMDKYGSDKPDLRFGMEINDISEVVKGVDFKVFQNALENGGSVRAIKVTGSAALGRKQLDKLVEFVKTYGASGLIWMAYKKEGIKCSISKFLTEEDTQNILNKMEAAEGDLILIVADKNKVVFESLGALRIHMAKQTGILEGNNDFKFVWITEFPLLSYNEEENRYQAEHHPFVMPMDEDIQYLESNPEKVRAKAYDIVLNGEELGGGSIRIHDTKLQEKMFGAIGISKDTAWNKFGYFLEALKFGPPPHGGLAYGFDRMIMFLAGTDNIKDVIAFPKNQNAFCPLTEAPNSVDKSQLKDLGIEVK.

Glutamate 180 is a binding site for L-aspartate. An aspartate region spans residues 204-207 (QLFK). An L-aspartate-binding site is contributed by arginine 226. ATP contacts are provided by residues 226 to 228 (RDE) and glutamine 235. Residue histidine 454 participates in L-aspartate binding. ATP is bound at residue glutamate 488. Arginine 495 provides a ligand contact to L-aspartate. Residue 540–543 (GFDR) participates in ATP binding.

This sequence belongs to the class-II aminoacyl-tRNA synthetase family. Type 1 subfamily. Homodimer.

It is found in the cytoplasm. It carries out the reaction tRNA(Asp) + L-aspartate + ATP = L-aspartyl-tRNA(Asp) + AMP + diphosphate. Its function is as follows. Catalyzes the attachment of L-aspartate to tRNA(Asp) in a two-step reaction: L-aspartate is first activated by ATP to form Asp-AMP and then transferred to the acceptor end of tRNA(Asp). This Clostridium kluyveri (strain NBRC 12016) protein is Aspartate--tRNA ligase.